A 206-amino-acid chain; its full sequence is Sclerostin domain-containing protein 1 (206 aa).

The first 23 residues, 1 to 23, serve as a signal peptide directing secretion; it reads MLPPAIHLSLIPLLCILMRNCLA. Positions 42–62 are disordered; that stretch reads AHPSSNSTLNQARNGGRHFSS. Residues 44-62 show a composition bias toward polar residues; that stretch reads PSSNSTLNQARNGGRHFSS. An N-linked (GlcNAc...) asparagine glycan is attached at asparagine 47. Intrachain disulfides connect cysteine 75-cysteine 133, cysteine 89-cysteine 147, cysteine 100-cysteine 163, and cysteine 104-cysteine 165. In terms of domain architecture, CTCK spans 75 to 170; that stretch reads CRELRSTKYI…TACKCKRYTR (96 aa). Asparagine 173 is a glycosylation site (N-linked (GlcNAc...) asparagine). The interval 176 to 206 is disordered; the sequence is SHNFESVSPAKPAQHHRERKRASKSSKHSLS. The span at 188 to 206 shows a compositional bias: basic residues; it reads AQHHRERKRASKSSKHSLS.

Belongs to the sclerostin family. As to quaternary structure, interacts with BMP2, BMP4, BMP6 and BMP7 with high affinity. As to expression, highly expressed in kidney at renal collecting ducts level and weakly in brain.

It is found in the secreted. May be involved in the onset of endometrial receptivity for implantation/sensitization for the decidual cell reaction. Enhances Wnt signaling and inhibits TGF-beta signaling. Directly antagonizes activity of BMP2, BMP4, BMP6 and BMP7 in a dose-dependent manner. This chain is Sclerostin domain-containing protein 1 (Sostdc1), found in Mus musculus (Mouse).